A 1329-amino-acid chain; its full sequence is BRCT domain-containing protein At4g02110 (1329 aa).

BRCT domains follow at residues 7–97 (LPPK…SILY) and 104–194 (NGIP…DYEI). 5 disordered regions span residues 295–378 (ANKT…SMER), 393–470 (GEEF…TSEL), 576–645 (EVPE…SPTD), 745–827 (NDVP…ADGK), and 952–1077 (AKKE…KESK). Polar residues-rich tracts occupy residues 323-335 (SLAT…LQRS) and 363-378 (SAFN…SMER). 2 stretches are compositionally biased toward basic and acidic residues: residues 410–422 (VSRK…HHNS) and 600–611 (RMKDKQETELTT). A compositionally biased stretch (basic residues) spans 793–802 (GKSRVKKTKI). Composition is skewed to basic and acidic residues over residues 818–827 (DGGDNSADGK) and 971–983 (DDNK…EGIV). Positions 986-1004 (SSLQSGKKGSSSRVEVGKS) are enriched in low complexity. The span at 1024 to 1047 (VMKDVGDNSAKEKENIAVDNESRK) shows a compositional bias: basic and acidic residues. The 92-residue stretch at 1090–1181 (FQDQEHEPKF…KLLQEEPYEW (92 aa)) folds into the BRCT 3 domain.

This Arabidopsis thaliana (Mouse-ear cress) protein is BRCT domain-containing protein At4g02110.